The following is a 283-amino-acid chain: Pantothenate synthetase (283 aa).

Residue 34–41 (MGALHDGH) participates in ATP binding. Histidine 41 (proton donor) is an active-site residue. (R)-pantoate is bound at residue glutamine 65. Beta-alanine is bound at residue glutamine 65. 152–155 (GSKD) serves as a coordination point for ATP. Residue glutamine 158 coordinates (R)-pantoate. Residues isoleucine 181 and 189 to 192 (MSSR) each bind ATP.

Belongs to the pantothenate synthetase family. Homodimer.

It is found in the cytoplasm. It carries out the reaction (R)-pantoate + beta-alanine + ATP = (R)-pantothenate + AMP + diphosphate + H(+). The protein operates within cofactor biosynthesis; (R)-pantothenate biosynthesis; (R)-pantothenate from (R)-pantoate and beta-alanine: step 1/1. Catalyzes the condensation of pantoate with beta-alanine in an ATP-dependent reaction via a pantoyl-adenylate intermediate. The protein is Pantothenate synthetase of Rhodopseudomonas palustris (strain HaA2).